We begin with the raw amino-acid sequence, 177 residues long: ATP synthase subunit delta (177 aa).

Belongs to the ATPase delta chain family. In terms of assembly, F-type ATPases have 2 components, F(1) - the catalytic core - and F(0) - the membrane proton channel. F(1) has five subunits: alpha(3), beta(3), gamma(1), delta(1), epsilon(1). F(0) has three main subunits: a(1), b(2) and c(10-14). The alpha and beta chains form an alternating ring which encloses part of the gamma chain. F(1) is attached to F(0) by a central stalk formed by the gamma and epsilon chains, while a peripheral stalk is formed by the delta and b chains.

The protein resides in the cell inner membrane. Its function is as follows. F(1)F(0) ATP synthase produces ATP from ADP in the presence of a proton or sodium gradient. F-type ATPases consist of two structural domains, F(1) containing the extramembraneous catalytic core and F(0) containing the membrane proton channel, linked together by a central stalk and a peripheral stalk. During catalysis, ATP synthesis in the catalytic domain of F(1) is coupled via a rotary mechanism of the central stalk subunits to proton translocation. Functionally, this protein is part of the stalk that links CF(0) to CF(1). It either transmits conformational changes from CF(0) to CF(1) or is implicated in proton conduction. This chain is ATP synthase subunit delta, found in Citrobacter koseri (strain ATCC BAA-895 / CDC 4225-83 / SGSC4696).